A 676-amino-acid polypeptide reads, in one-letter code: Probable metal-nicotianamine transporter YSL6 (676 aa).

13 helical membrane passes run 38–58, 62–82, 110–130, 154–174, 276–296, 321–341, 392–412, 413–433, 452–472, 510–530, 561–581, 604–624, and 639–659; these read ITIR…IITH, LTVG…FFFV, CVVA…LIAM, GLWW…FSLV, IVNC…WPFV, VFIA…KIIA, FAIA…PIIF, PPLK…LAFC, IGLF…AGLA, VGTA…WTAF, LPKH…IVNL, FYIG…LFVW, and VASG…ILSI.

Belongs to the YSL (TC 2.A.67.2) family.

The protein resides in the membrane. In terms of biological role, may be involved in the transport of nicotianamine-chelated metals. This is Probable metal-nicotianamine transporter YSL6 (YSL6) from Arabidopsis thaliana (Mouse-ear cress).